The following is a 406-amino-acid chain: UPF0754 membrane protein CYA_0973 (406 aa).

Helical transmembrane passes span 1-21 (MALW…YFTN) and 385-405 (IVNL…LFLL).

Belongs to the UPF0754 family.

The protein localises to the cell inner membrane. The protein is UPF0754 membrane protein CYA_0973 of Synechococcus sp. (strain JA-3-3Ab) (Cyanobacteria bacterium Yellowstone A-Prime).